We begin with the raw amino-acid sequence, 215 residues long: Peptide methionine sulfoxide reductase MsrA (215 aa).

The active site involves cysteine 58.

The protein belongs to the MsrA Met sulfoxide reductase family.

It catalyses the reaction L-methionyl-[protein] + [thioredoxin]-disulfide + H2O = L-methionyl-(S)-S-oxide-[protein] + [thioredoxin]-dithiol. The catalysed reaction is [thioredoxin]-disulfide + L-methionine + H2O = L-methionine (S)-S-oxide + [thioredoxin]-dithiol. Its function is as follows. Has an important function as a repair enzyme for proteins that have been inactivated by oxidation. Catalyzes the reversible oxidation-reduction of methionine sulfoxide in proteins to methionine. The polypeptide is Peptide methionine sulfoxide reductase MsrA (Pseudomonas syringae pv. tomato (strain ATCC BAA-871 / DC3000)).